Here is a 215-residue protein sequence, read N- to C-terminus: Vesicle-trafficking protein SEC22b (215 aa).

Residues 1-194 (MVLLTMIARV…KYLNMRSTYA (194 aa)) are Cytoplasmic-facing. One can recognise a Longin domain in the interval 6–119 (MIARVADGLP…YSFIEFDTFI (114 aa)). At Lys38 the chain carries N6-acetyllysine. One can recognise a v-SNARE coiled-coil homology domain in the interval 134-194 (NLGSINTELQ…KYLNMRSTYA (61 aa)). The residue at position 137 (Ser137) is a Phosphoserine. Residue Thr140 is modified to Phosphothreonine. A phosphoserine mark is found at Ser164, Ser168, Ser174, and Ser177. A helical; Anchor for type IV membrane protein membrane pass occupies residues 195 to 215 (KLAAVAVFFIMLIVYVRFWWL).

The protein belongs to the synaptobrevin family. In terms of assembly, interacts with STX17. Component of two distinct SNARE complexes consisting of STX5, GOSR2/BOS1, BET1 and SEC22B or STX18, USE1L, BNIP1/SEC20L and SEC22B. YKT6 can probably replace SEC22B as subunit of either complex. Interacts with the COPII Sec23/24 complex composed of SEC23A and SEC24A; recruits SEC22B into COPII-coated vesicles to allow its transport from the endoplasmic reticulum to the Golgi. Interacts with BET1.

The protein localises to the endoplasmic reticulum membrane. Its subcellular location is the endoplasmic reticulum-Golgi intermediate compartment membrane. The protein resides in the golgi apparatus. It localises to the cis-Golgi network membrane. It is found in the trans-Golgi network membrane. The protein localises to the melanosome. Functionally, SNARE involved in targeting and fusion of ER-derived transport vesicles with the Golgi complex as well as Golgi-derived retrograde transport vesicles with the ER. The sequence is that of Vesicle-trafficking protein SEC22b (Sec22b) from Cricetulus griseus (Chinese hamster).